The primary structure comprises 255 residues: uncharacterized protein (255 aa).

[4Fe-4S] cluster contacts are provided by C122 and C160.

Homodimer. [4Fe-4S] cluster serves as cofactor.

This is an uncharacterized protein from Escherichia coli (strain K12).